Here is an 89-residue protein sequence, read N- to C-terminus: Rho beta-crystallin (89 aa).

His31 is a substrate binding site.

It belongs to the aldo/keto reductase family. Monomer.

In Lepidodactylus lugubris (Mourning gecko), this protein is Rho beta-crystallin.